Here is a 357-residue protein sequence, read N- to C-terminus: Dihydroflavonol 4-reductase (357 aa).

Residues Lys-49 and Tyr-168 each coordinate NADP(+).

Belongs to the NAD(P)-dependent epimerase/dehydratase family. Dihydroflavonol-4-reductase subfamily.

It catalyses the reaction a (2R,3S,4S)-leucoanthocyanidin + NADP(+) = a (2R,3R)-dihydroflavonol + NADPH + H(+). The catalysed reaction is (2S)-flavan-4-ol + NADP(+) = (2S)-flavanone + NADPH + H(+). The protein operates within pigment biosynthesis; anthocyanin biosynthesis. Functionally, bifunctional enzyme involved in flavonoid metabolism. This Zea mays (Maize) protein is Dihydroflavonol 4-reductase (A1).